Reading from the N-terminus, the 473-residue chain is P3 protein (473 aa).

Transmembrane regions (helical) follow at residues 25–45 (FVGM…AQVM), 221–241 (PMLL…FLMA), 249–269 (ALAL…SYLF), 277–297 (VTLA…FLPL), 316–336 (ISKI…GVVI), 356–376 (FILL…ILVG), 381–401 (IVLV…SLAI), 413–433 (VSIE…QLSL), and 446–466 (FIVA…QFIY).

Belongs to the bile acid:sodium symporter (BASS) (TC 2.A.28) family.

It localises to the membrane. The ubiquitous expression and the conservation of the sequence in distant animal species suggest that the gene codes for a protein with housekeeping functions. The polypeptide is P3 protein (Slc10a3) (Mus musculus (Mouse)).